A 612-amino-acid polypeptide reads, in one-letter code: FAD-linked oxidoreductase notD' (612 aa).

Positions 1-19 are cleaved as a signal peptide; the sequence is MRDIRELLLVLFTSCLALG. Residues Asn-50, Asn-86, and Asn-109 are each glycosylated (N-linked (GlcNAc...) asparagine). One can recognise an FAD-binding PCMH-type domain in the interval 124–307; the sequence is GQGRIPRYSA…TSITMPVFGA (184 aa). N-linked (GlcNAc...) asparagine glycans are attached at residues Asn-311 and Asn-396.

Belongs to the oxygen-dependent FAD-linked oxidoreductase family. The cofactor is FAD.

It functions in the pathway alkaloid biosynthesis. Functionally, FAD-linked oxidoreductase; part of the gene cluster that mediates the biosynthesis of notoamide, a fungal indole alkaloid that belongs to a family of natural products containing a characteristic bicyclo[2.2.2]diazaoctane core. The first step of notoamide biosynthesis involves coupling of L-proline and L-tryptophan by the bimodular NRPS notE', to produce cyclo-L-tryptophan-L-proline called brevianamide F. The reverse prenyltransferase notF' then acts as a deoxybrevianamide E synthase and converts brevianamide F to deoxybrevianamide E via reverse prenylation at C-2 of the indole ring leading to the bicyclo[2.2.2]diazaoctane core. Deoxybrevianamide E is further hydroxylated at C-6 of the indole ring, likely catalyzed by the cytochrome P450 monooxygenase notG', to yield 6-hydroxy-deoxybrevianamide E. 6-hydroxy-deoxybrevianamide E is a specific substrate of the prenyltransferase notC' for normal prenylation at C-7 to produce 6-hydroxy-7-prenyl-deoxybrevianamide, also called notoamide S. As the proposed pivotal branching point in notoamide biosynthesis, notoamide S can be diverted to notoamide E through an oxidative pyran ring closure putatively catalyzed by either notH' cytochrome P450 monooxygenase or the notD' FAD-linked oxidoreductase. This step would be followed by an indole 2,3-epoxidation-initiated pinacol-like rearrangement catalyzed by the notB' FAD-dependent monooxygenase leading to the formation of notoamide C and notoamide D. On the other hand notoamide S is converted to notoamide T by notH' (or notD'), a bifunctional oxidase that also functions as the intramolecular Diels-Alderase responsible for generation of (-)-notoamide T. To generate antipodal (+)-notoaminide T, notH (or notD) in Aspergillus strain MF297-2 is expected to catalyze a Diels-Alder reaction leading to the opposite stereochemistry. The remaining oxidoreductase notD' (or notH') likely catalyzes the oxidative pyran ring formation to yield (-)-stephacidin A. The FAD-dependent monooxygenase notI' is highly similar to notB' and is predicted to catalyze a similar conversion from (-)-stephacidin A to (+)-notoamide B via the 2,3-epoxidation of (-)-stephacidin A followed by a pinacol-type rearrangement. Finally, it remains unclear which enzyme could be responsible for the final hydroxylation steps leading to notoamide A and sclerotiamide. This Aspergillus versicolor protein is FAD-linked oxidoreductase notD'.